The primary structure comprises 90 residues: Small ribosomal subunit protein bS20 (90 aa).

The protein belongs to the bacterial ribosomal protein bS20 family.

In terms of biological role, binds directly to 16S ribosomal RNA. The protein is Small ribosomal subunit protein bS20 of Rickettsia canadensis (strain McKiel).